The primary structure comprises 370 residues: ATP synthase gamma chain, chloroplastic (370 aa).

A chloroplast-targeting transit peptide spans 1-54; the sequence is MRSFCIAALLAVASAFTTQPTSFTVKTANVGERASGVFPEQSSAHRTRKATIVM. C145 is an active-site residue.

This sequence belongs to the ATPase gamma chain family. F-type ATPases have 2 components, CF(1) - the catalytic core - and CF(0) - the membrane proton channel. CF(1) has five subunits: alpha(3), beta(3), gamma(1), delta(1), epsilon(1). CF(0) has four main subunits: a, b, b' and c.

The protein localises to the plastid. The protein resides in the chloroplast thylakoid membrane. In terms of biological role, produces ATP from ADP in the presence of a proton gradient across the membrane. The gamma chain is believed to be important in regulating ATPase activity and the flow of protons through the CF(0) complex. This is ATP synthase gamma chain, chloroplastic (ATPC) from Phaeodactylum tricornutum (Diatom).